The sequence spans 274 residues: Subtilisin DY (274 aa).

Glutamine 2 is a binding site for Ca(2+). Positions 5–273 (PYGIPLIKAD…KGLINVEAAA (269 aa)) constitute a Peptidase S8 domain. The active-site Charge relay system is aspartate 32. Position 41 (aspartate 41) interacts with Ca(2+). Catalysis depends on histidine 63, which acts as the Charge relay system. Ca(2+)-binding residues include leucine 74, asparagine 76, valine 80, alanine 168, tyrosine 170, and valine 173. Catalysis depends on serine 220, which acts as the Charge relay system.

Belongs to the peptidase S8 family. The cofactor is Ca(2+).

It localises to the secreted. The enzyme catalyses Hydrolysis of proteins with broad specificity for peptide bonds, and a preference for a large uncharged residue in P1. Hydrolyzes peptide amides.. Functionally, subtilisin is an extracellular alkaline serine protease, it catalyzes the hydrolysis of proteins and peptide amides. The protein is Subtilisin DY (apr) of Bacillus licheniformis.